Consider the following 706-residue polypeptide: Coiled-coil domain-containing protein 177 (706 aa).

Residues 1–11 (MVDPVPEEEKE) show a composition bias toward acidic residues. 3 disordered regions span residues 1-63 (MVDP…GGRR), 179-262 (ASAL…LREL), and 268-287 (ASAR…NPLG). Composition is skewed to low complexity over residues 28–49 (PPDA…AAAP) and 179–209 (ASAL…RRTS). Residues 210–221 (PSPPARSRPPPA) show a composition bias toward pro residues. The span at 242 to 257 (ALSSESGASSSSYSGE) shows a compositional bias: low complexity. At Ser-310 the chain carries Phosphoserine. Residues 360–624 (AAHGQWEQQR…QTRLEKERAQ (265 aa)) are a coiled coil. 4 disordered regions span residues 364–386 (QWEQ…KQRA), 398–425 (VEER…RSEE), 448–580 (DDRL…EREH), and 651–706 (ERSE…LDRK). Residues 368–386 (QRVRAEQRREREEREKQRA) show a composition bias toward basic and acidic residues. Basic and acidic residues-rich tracts occupy residues 448-529 (DDRL…REGL), 548-580 (QEQR…EREH), and 651-663 (ERSE…RRSA). Residues 664–674 (LESARSTARAS) show a composition bias toward low complexity. Residues 676–706 (HVREKVREETNTRSFDRMVREAQLHASLDRK) show a composition bias toward basic and acidic residues.

The protein is Coiled-coil domain-containing protein 177 (Ccdc177) of Mus musculus (Mouse).